The sequence spans 235 residues: MPKHGKKFRNALEGTDLQERFSVEDAVGKSLGAAFAKFDETVDVAIRLGVDPKYSDQMVRGAVTLPNGLGKTVRVAVFCKGEKQAEAREAGADIVGAEDLVAEVKAGNLNFDAAVATPDVMALVGQIGRLLGPRGLMPNAKTGSVTFDVAKAVSELKAGRVDFKVDKAGVLHAPLGKASFGPEKILGNLKALLDTVNRLKPSSAKGTYLISMAISTTMGPGFKVDMTQVKKFLEG.

The protein belongs to the universal ribosomal protein uL1 family. Part of the 50S ribosomal subunit.

Binds directly to 23S rRNA. The L1 stalk is quite mobile in the ribosome, and is involved in E site tRNA release. Its function is as follows. Protein L1 is also a translational repressor protein, it controls the translation of the L11 operon by binding to its mRNA. The polypeptide is Large ribosomal subunit protein uL1 (Desulfovibrio desulfuricans (strain ATCC 27774 / DSM 6949 / MB)).